A 276-amino-acid chain; its full sequence is tRNA dimethylallyltransferase (276 aa).

An interaction with substrate tRNA region spans residues 9–12 (DSLS).

It belongs to the IPP transferase family. As to quaternary structure, monomer. Mg(2+) serves as cofactor.

The enzyme catalyses adenosine(37) in tRNA + dimethylallyl diphosphate = N(6)-dimethylallyladenosine(37) in tRNA + diphosphate. Catalyzes the transfer of a dimethylallyl group onto the adenine at position 37 in tRNAs that read codons beginning with uridine, leading to the formation of N6-(dimethylallyl)adenosine (i(6)A). This chain is tRNA dimethylallyltransferase (miaA), found in Helicobacter pylori (strain Shi470).